Here is a 427-residue protein sequence, read N- to C-terminus: MLDIKWIRENPETLDKALAKRGAAPLSSELIALDEKRREHVGKVQAAQERRNAASKEIGKAMAAKDMGTAEKLKAEVGELKDFLAHAEEDERRLSKELSDALSTIPNIPLDDVPLGKDESDNVELRRIGNPHNFSFQPKEHFELGEALGYMDFERAAKLAGARFTVLKGPLARLERALGQFMLDLHTTEHGYTEVMPPLMVRDEAVYGTGQLPKFSEDLFRTTDGRWLIPTAEVPLTNLVAEEIVDMKGLPLRFTALTPCFRSEAGSAGRDTRGMLRQHQFLKVEMVSITDAESSVAEHERMTACAEEVLKRLGLPFRTVVLCTGDMGFGAQRTYDIEVWLPGQNTYREISSCSTCGDFQGRRMNARYRPEGEKSTRFVHTLNGSGVAVGRALIAVMENYQQEDGSIHIPEALQPYMGGLTRIEKAA.

231 to 233 (TAE) contributes to the L-serine binding site. ATP is bound at residue 262-264 (RSE). E285 serves as a coordination point for L-serine. ATP is bound at residue 349–352 (EISS). L-serine is bound at residue S385.

It belongs to the class-II aminoacyl-tRNA synthetase family. Type-1 seryl-tRNA synthetase subfamily. As to quaternary structure, homodimer. The tRNA molecule binds across the dimer.

The protein resides in the cytoplasm. The enzyme catalyses tRNA(Ser) + L-serine + ATP = L-seryl-tRNA(Ser) + AMP + diphosphate + H(+). It catalyses the reaction tRNA(Sec) + L-serine + ATP = L-seryl-tRNA(Sec) + AMP + diphosphate + H(+). Its pathway is aminoacyl-tRNA biosynthesis; selenocysteinyl-tRNA(Sec) biosynthesis; L-seryl-tRNA(Sec) from L-serine and tRNA(Sec): step 1/1. Its function is as follows. Catalyzes the attachment of serine to tRNA(Ser). Is also able to aminoacylate tRNA(Sec) with serine, to form the misacylated tRNA L-seryl-tRNA(Sec), which will be further converted into selenocysteinyl-tRNA(Sec). The protein is Serine--tRNA ligase of Brucella abortus (strain S19).